Reading from the N-terminus, the 397-residue chain is Mannonate dehydratase 2 (397 aa).

Belongs to the mannonate dehydratase family. Fe(2+) serves as cofactor. Mn(2+) is required as a cofactor.

The catalysed reaction is D-mannonate = 2-dehydro-3-deoxy-D-gluconate + H2O. Its pathway is carbohydrate metabolism; pentose and glucuronate interconversion. Functionally, catalyzes the dehydration of D-mannonate. This chain is Mannonate dehydratase 2 (uxuA2), found in Agrobacterium fabrum (strain C58 / ATCC 33970) (Agrobacterium tumefaciens (strain C58)).